The sequence spans 288 residues: uncharacterized protein (288 aa).

NAD(+) is bound by residues 6–20 and T97; that span reads GFIG…MASH. K172 is an active-site residue. Residue K240 coordinates NAD(+).

Belongs to the HIBADH-related family.

Its subcellular location is the cell membrane. It localises to the membrane raft. This is an uncharacterized protein from Bacillus subtilis (strain 168).